We begin with the raw amino-acid sequence, 211 residues long: Probable molybdenum cofactor guanylyltransferase (211 aa).

Residues 21–23 (LAG), Lys-33, Asp-84, and Asp-116 each bind GTP. Mg(2+) is bound at residue Asp-116.

Belongs to the MobA family. Requires Mg(2+) as cofactor.

The protein resides in the cytoplasm. The enzyme catalyses Mo-molybdopterin + GTP + H(+) = Mo-molybdopterin guanine dinucleotide + diphosphate. Functionally, transfers a GMP moiety from GTP to Mo-molybdopterin (Mo-MPT) cofactor (Moco or molybdenum cofactor) to form Mo-molybdopterin guanine dinucleotide (Mo-MGD) cofactor. This chain is Probable molybdenum cofactor guanylyltransferase, found in Rhodopirellula baltica (strain DSM 10527 / NCIMB 13988 / SH1).